We begin with the raw amino-acid sequence, 142 residues long: Spliceosomal protein DIB1 (142 aa).

It belongs to the DIM1 family. As to quaternary structure, component of the 25S [U4/U6.U5] tri-snRNP.

The protein resides in the nucleus. Its function is as follows. Essential role in pre-mRNA splicing. Also essential for entry into mitosis (G2/M progression) as well as for chromosome segregation during mitosis. The polypeptide is Spliceosomal protein DIB1 (DIB1) (Candida glabrata (strain ATCC 2001 / BCRC 20586 / JCM 3761 / NBRC 0622 / NRRL Y-65 / CBS 138) (Yeast)).